The chain runs to 514 residues: Na(+)/H(+) antiporter NhaB (514 aa).

The next 11 helical transmembrane spans lie at 13-33 (FMGN…IINP), 34-54 (LIFF…EFIF), 96-116 (VILL…LLLF), 136-156 (CFAS…AVVI), 203-223 (LMMH…VGEP), 236-256 (FVTF…AGLA), 304-324 (ALIG…VGII), 349-369 (EEAL…AVII), 392-412 (LFYL…VGTV), 448-468 (ATPN…SPLI), and 479-499 (ALPY…FWLV).

It belongs to the NhaB Na(+)/H(+) (TC 2.A.34) antiporter family.

It is found in the cell inner membrane. The enzyme catalyses 2 Na(+)(in) + 3 H(+)(out) = 2 Na(+)(out) + 3 H(+)(in). In terms of biological role, na(+)/H(+) antiporter that extrudes sodium in exchange for external protons. This chain is Na(+)/H(+) antiporter NhaB, found in Proteus mirabilis (strain HI4320).